Here is a 326-residue protein sequence, read N- to C-terminus: DNA-directed RNA polymerase subunit alpha (326 aa).

An alpha N-terminal domain (alpha-NTD) region spans residues 1–231 (MQTALLKPKI…DQLSVFAALE (231 aa)). Residues 247–326 (IDPILLRPVD…ENWPPAGLDK (80 aa)) form an alpha C-terminal domain (alpha-CTD) region.

Belongs to the RNA polymerase alpha chain family. Homodimer. The RNAP catalytic core consists of 2 alpha, 1 beta, 1 beta' and 1 omega subunit. When a sigma factor is associated with the core the holoenzyme is formed, which can initiate transcription.

The catalysed reaction is RNA(n) + a ribonucleoside 5'-triphosphate = RNA(n+1) + diphosphate. In terms of biological role, DNA-dependent RNA polymerase catalyzes the transcription of DNA into RNA using the four ribonucleoside triphosphates as substrates. The sequence is that of DNA-directed RNA polymerase subunit alpha from Cupriavidus pinatubonensis (strain JMP 134 / LMG 1197) (Cupriavidus necator (strain JMP 134)).